The primary structure comprises 100 residues: Urease subunit gamma (100 aa).

Belongs to the urease gamma subunit family. In terms of assembly, heterotrimer of UreA (gamma), UreB (beta) and UreC (alpha) subunits. Three heterotrimers associate to form the active enzyme.

Its subcellular location is the cytoplasm. The enzyme catalyses urea + 2 H2O + H(+) = hydrogencarbonate + 2 NH4(+). Its pathway is nitrogen metabolism; urea degradation; CO(2) and NH(3) from urea (urease route): step 1/1. The polypeptide is Urease subunit gamma (Methylocella silvestris (strain DSM 15510 / CIP 108128 / LMG 27833 / NCIMB 13906 / BL2)).